A 65-amino-acid chain; its full sequence is uncharacterized protein (65 aa).

It is found in the plastid. The protein localises to the chloroplast. This is an uncharacterized protein from Guillardia theta (Cryptophyte).